A 307-amino-acid polypeptide reads, in one-letter code: High-affinity branched-chain amino acid transport system permease protein BraD (307 aa).

10 helical membrane passes run 21–41 (YALI…INFA), 45–65 (VYMI…MMGL), 70–90 (LMML…GYSI), 104–124 (LIPL…VMLS), 132–152 (IPTL…GVVI), 154–174 (YMQI…TLFI), 203–223 (IIAL…VLLG), 224–244 (MQYG…AFTA), 245–265 (AVLG…LLGV), and 280–300 (DVVA…GILG).

It belongs to the binding-protein-dependent transport system permease family. LivHM subfamily.

It localises to the cell inner membrane. Functionally, component of the high affinity leucine, isoleucine, valine, transport system (LIV-I), which is operative without Na(+) and is specific for alanine and threonine, in addition to branched-chain amino acids. This is High-affinity branched-chain amino acid transport system permease protein BraD (braD) from Pseudomonas aeruginosa (strain ATCC 15692 / DSM 22644 / CIP 104116 / JCM 14847 / LMG 12228 / 1C / PRS 101 / PAO1).